The primary structure comprises 292 residues: Undecaprenyl-diphosphatase 2 (292 aa).

The next 5 helical transmembrane spans lie at 89-109, 118-138, 203-223, 232-252, and 263-283; these read WLVI…QDAI, LIAT…WYAS, FLLA…SIGG, PTIL…AWFL, and FVLY…GGAL.

This sequence belongs to the UppP family.

It localises to the cell membrane. It carries out the reaction di-trans,octa-cis-undecaprenyl diphosphate + H2O = di-trans,octa-cis-undecaprenyl phosphate + phosphate + H(+). Functionally, catalyzes the dephosphorylation of undecaprenyl diphosphate (UPP). Confers resistance to bacitracin. This is Undecaprenyl-diphosphatase 2 from Frankia casuarinae (strain DSM 45818 / CECT 9043 / HFP020203 / CcI3).